The chain runs to 236 residues: UPF0177 protein YaiH (236 aa).

The next 6 membrane-spanning stretches (helical) occupy residues Y16 to Y36, A51 to I71, I90 to Y110, I131 to A151, T180 to Y200, and I210 to I230.

This sequence belongs to the UPF0177 family.

It localises to the cell membrane. This is UPF0177 protein YaiH (yaiH) from Lactococcus lactis subsp. lactis (strain IL1403) (Streptococcus lactis).